The following is a 298-amino-acid chain: 4-hydroxy-tetrahydrodipicolinate synthase (298 aa).

Thr-48 serves as a coordination point for pyruvate. Tyr-137 acts as the Proton donor/acceptor in catalysis. Lys-166 acts as the Schiff-base intermediate with substrate in catalysis. Ile-207 contacts pyruvate.

It belongs to the DapA family. In terms of assembly, homotetramer; dimer of dimers.

It is found in the cytoplasm. It carries out the reaction L-aspartate 4-semialdehyde + pyruvate = (2S,4S)-4-hydroxy-2,3,4,5-tetrahydrodipicolinate + H2O + H(+). Its pathway is amino-acid biosynthesis; L-lysine biosynthesis via DAP pathway; (S)-tetrahydrodipicolinate from L-aspartate: step 3/4. In terms of biological role, catalyzes the condensation of (S)-aspartate-beta-semialdehyde [(S)-ASA] and pyruvate to 4-hydroxy-tetrahydrodipicolinate (HTPA). This is 4-hydroxy-tetrahydrodipicolinate synthase from Campylobacter jejuni subsp. jejuni serotype O:2 (strain ATCC 700819 / NCTC 11168).